A 724-amino-acid chain; its full sequence is MPRNSGAGYGCPHGDPSMLDSRETPQESRQDMIVRTTQEKLKTSSLTDRQPLSKESLNHALELSVPEKVNNAQWDAPEEALWTTRADGRVRLRIDPSCPQLPYTVHRMFYEALDKYGDLIALGFKRQDKWEHISYSQYYLLARRAAKGFLKLGLKQAHSVAILGFNSPEWFFSAVGTVFAGGIVTGIYTTSSPEACQYIAYDCCANVIMVDTQKQLEKILKIWKQLPHLKAVVIYKEPPPNKMANVYTMEEFMELGNEVPEEALDAIIDTQQPNQCCVLVYTSGTTGNPKGVMLSQDNITWTARYGSQAGDIRPAEVQQEVVVSYLPLSHIAAQIYDLWTGIQWGAQVCFAEPDALKGSLVNTLREVEPTSHMGVPRVWEKIMERIQEVAAQSGFIRRKMLLWAMSVTLEQNLTCPGSDLKPFTTRLADYLVLAKVRQALGFAKCQKNFYGAAPMMAETQHFFLGLNIRLYAGYGLSETSGPHFMSSPYNYRLYSSGKLVPGCRVKLVNQDAEGIGEICLWGRTIFMGYLNMEDKTCEAIDEEGWLHTGDAGRLDADGFLYITGRLKELIITAGGENVPPVPIEEAVKMELPIISNAMLIGDQRKFLSMLLTLKCTLDPDTSDQTDNLTEQAMEFCQRVGSRATTVSEIIEKKDEAVYQAIEEGIRRVNMNAAARPYHIQKWAILERDFSISGGELGPTMKLKRLTVLEKYKGIIDSFYQEQKM.

Residues 1–30 (MPRNSGAGYGCPHGDPSMLDSRETPQESRQ) are disordered. The span at 20–30 (DSRETPQESRQ) shows a compositional bias: basic and acidic residues. Residues serine 53 and serine 56 each carry the phosphoserine modification. ATP contacts are provided by residues 282–290 (TSGTTGNPK), 472–477 (AGYGLS), aspartate 550, and arginine 565. Tyrosine 658 carries the post-translational modification Phosphotyrosine. Lysine 701 contacts ATP.

The protein belongs to the ATP-dependent AMP-binding enzyme family. Bubblegum subfamily. As to expression, expressed primarily in brain. Expressed at lower level in testis and adrenal gland. Present in all regions of brain except pituitary.

The protein resides in the cytoplasm. The protein localises to the cytoplasmic vesicle. It localises to the microsome. Its subcellular location is the endoplasmic reticulum. It is found in the cell membrane. It carries out the reaction a long-chain fatty acid + ATP + CoA = a long-chain fatty acyl-CoA + AMP + diphosphate. The catalysed reaction is (E)-hexadec-2-enoate + ATP + CoA = (2E)-hexadecenoyl-CoA + AMP + diphosphate. It catalyses the reaction hexadecanoate + ATP + CoA = hexadecanoyl-CoA + AMP + diphosphate. In terms of biological role, catalyzes the conversion of fatty acids such as long-chain and very long-chain fatty acids to their active form acyl-CoAs for both synthesis of cellular lipids, and degradation via beta-oxidation. Can activate diverse saturated, monosaturated and polyunsaturated fatty acids. The protein is Long-chain-fatty-acid--CoA ligase ACSBG1 of Homo sapiens (Human).